Reading from the N-terminus, the 354-residue chain is 3-dehydroquinate synthase (354 aa).

NAD(+) contacts are provided by residues 100–104, 124–125, Lys136, Lys145, and 163–166; these read GATGD, TT, and FLKT. Residues Glu178, His242, and His256 each contribute to the Zn(2+) site.

Belongs to the sugar phosphate cyclases superfamily. Dehydroquinate synthase family. Requires NAD(+) as cofactor. Co(2+) is required as a cofactor. The cofactor is Zn(2+).

It is found in the cytoplasm. The enzyme catalyses 7-phospho-2-dehydro-3-deoxy-D-arabino-heptonate = 3-dehydroquinate + phosphate. Its pathway is metabolic intermediate biosynthesis; chorismate biosynthesis; chorismate from D-erythrose 4-phosphate and phosphoenolpyruvate: step 2/7. Catalyzes the conversion of 3-deoxy-D-arabino-heptulosonate 7-phosphate (DAHP) to dehydroquinate (DHQ). This chain is 3-dehydroquinate synthase, found in Staphylococcus aureus (strain Mu50 / ATCC 700699).